The primary structure comprises 548 residues: MAGLRARRGPGRRLLVLSTLGFCLMLQVSAKRPPKTPPCPPSCSCTRDTAFCVDSKSVPKNLPSEVISLTLVNAAFSEIQDGAFSHLPLLQFLLLNSNKFTLIGDNAFIGLSHLQYLFIENNDIWALSKFTFRGLKSLTHLSLANNNLQTLPRDIFRPLDILSDLDLRGNALNCDCKVKWLVEWLAHTNTTVAPIYCASPPRFQEHKVQDLPLREFDCITTDFVLYQTLSFPAVSAEPFLYSSDLYLALAQPGASACTILKWDYVERQLRDYDRIPAPSAVHCKPMVVDGQLYVVVAQLFGGSYIYHWDPNTTRFTKLQDIDPQRVRKPNDLEAFRIDGDWFFAVADSSKAGATSLYRWHQNGFYSHQALHAWHRDTDLEFVDGEGKPRLIVSSSSQAPVIYQWSRSQKQFVAQGEVTQVPDAQAVKHFRAGRDSYLCLSRYIGDSKILRWEGTRFSEVQALPSRGSLALQPFLVGGHRYLALGSDFSFTQIYQWDEGRQKFVRFQELAVQAPRAFCYMPAGDAQLLLAPSFKGQTLVYRHVVVDLSA.

An N-terminal signal peptide occupies residues 1–30 (MAGLRARRGPGRRLLVLSTLGFCLMLQVSA). The LRRNT domain occupies 31–64 (KRPPKTPPCPPSCSCTRDTAFCVDSKSVPKNLPS). LRR repeat units lie at residues 89-110 (LLQFLLLNSNKFTLIGDNAFIG), 113-134 (HLQYLFIENNDIWALSKFTFRG), and 137-158 (SLTHLSLANNNLQTLPRDIFRP). Positions 170 to 220 (NALNCDCKVKWLVEWLAHTNTTVAPIYCASPPRFQEHKVQDLPLREFDCIT) constitute an LRRCT domain. Asn189 carries an N-linked (GlcNAc...) asparagine glycan. 2 EAR repeats span residues 222–264 (DFVL…KWDY) and 268–310 (QLRD…HWDP). An N-linked (GlcNAc...) asparagine glycan is attached at Asn311. 5 EAR repeats span residues 314–361 (RFTK…RWHQ), 363–406 (GFYS…QWSR), 410–453 (QFVA…RWEG), 455–497 (RFSE…QWDE), and 501–543 (KFVR…RHVV).

Interacts with STX1A. As to expression, brain.

Its subcellular location is the secreted. The protein localises to the cytoplasmic vesicle. The protein resides in the secretory vesicle. It is found in the synaptic vesicle. It localises to the synapse. Its subcellular location is the synaptosome. The protein localises to the cell projection. The protein resides in the axon. Its function is as follows. May participate in the regulation of neuronal exocytosis. The polypeptide is Leucine-rich repeat LGI family member 3 (Lgi3) (Mus musculus (Mouse)).